Reading from the N-terminus, the 50-residue chain is MARYRCCRSHSRSRCRPRRRRCRRRRRRCCPRRRRAVCCRRYTVIRCRRC.

Intrachain disulfides connect Cys7-Cys15 and Cys39-Cys47.

Belongs to the protamine P1 family. Cross-linked by interchain disulfide bonds around the DNA-helix. In terms of tissue distribution, testis.

It localises to the nucleus. It is found in the chromosome. Protamines substitute for histones in the chromatin of sperm during the haploid phase of spermatogenesis. They compact sperm DNA into a highly condensed, stable and inactive complex. In Sus scrofa (Pig), this protein is Sperm protamine P1 (PRM1).